The sequence spans 975 residues: GPI inositol-deacylase (975 aa).

A helical membrane pass occupies residues 27–47; it reads STLVIIVGLLLLCIITSTHIS. Asn-49 is a glycosylation site (N-linked (GlcNAc...) asparagine). The active site involves Ser-210. Residues Asn-276, Asn-384, Asn-407, Asn-419, and Asn-488 are each glycosylated (N-linked (GlcNAc...) asparagine). Residues 655–675 form a helical membrane-spanning segment; it reads LAFASIPISIIALVLCYQFYY. Asn-696 carries an N-linked (GlcNAc...) asparagine glycan. The next 3 membrane-spanning stretches (helical) occupy residues 699–719, 751–771, and 818–838; these read LLIFLFLSVGPIAINHKAILT, FVWWIGPVFFIISVALLFIIL, and VCFISLGVMVYVPYQFAFILV. A glycan (N-linked (GlcNAc...) asparagine) is linked at Asn-867. 3 consecutive transmembrane segments (helical) span residues 868–888, 932–952, and 955–975; these read VSFLMLTIFMIPINAPIVVVF, NWLIVVSILGYLSFYSFMYGI, and LYWVYHISNILNGVLFFLTIL.

Belongs to the GPI inositol-deacylase family.

The protein localises to the endoplasmic reticulum membrane. Functionally, involved in inositol deacylation of GPI-anchored proteins which plays important roles in the quality control and ER-associated degradation of GPI-anchored proteins. This Kluyveromyces lactis (strain ATCC 8585 / CBS 2359 / DSM 70799 / NBRC 1267 / NRRL Y-1140 / WM37) (Yeast) protein is GPI inositol-deacylase (BST1).